Consider the following 334-residue polypeptide: Dual specificity mitogen-activated protein kinase kinase 6 (334 aa).

A compositionally biased stretch (basic residues) spans 1-11 (MSQSKGKKRNP). A disordered region spans residues 1–34 (MSQSKGKKRNPGLKIPKEAFEQPQTSSTPPRDLD). The segment at 4 to 19 (SKGKKRNPGLKIPKEA) is d domain. The region spanning 53–314 (LEPIVELGRG…YPELMQHPFF (262 aa)) is the Protein kinase domain. Residues 59–67 (LGRGAYGVV) and Lys82 each bind ATP. Asp179 functions as the Proton acceptor in the catalytic mechanism. Ser207 carries the phosphoserine; by MAPK3 modification. Residue Thr211 is modified to Phosphothreonine; by MAPK3. The DVD domain stretch occupies residues 311 to 334 (HPFFTVHESKAADVASFVKLILGD).

The protein belongs to the protein kinase superfamily. STE Ser/Thr protein kinase family. MAP kinase kinase subfamily. Dimer. Interacts (via its D domain) with its substrates MAPK11, MAPK12, MAPK13 and MAPK14. Interacts (via its DVD domain) with MAP3Ks activators like MAP3K5/ASK1, MAP3K1/MEKK1, MAP3K2/MEKK2, MAP3K3/MEKK3, MAP3K4/MEKK4, MAP3K7/TAK1, MAP3K11/MLK3 and MAP3K17/TAOK2. Interacts with DCTN1. Interacts with EIF2AK2/PKR. Weakly autophosphorylated. Phosphorylated at Ser-207 and Thr-211 by the majority of M3Ks, such as MAP3K5/ASK1, MAP3K1/MEKK1, MAP3K2/MEKK2, MAP3K3/MEKK3, MAP3K4/MEKK4, MAP3K7/TAK1, MAP3K11/MLK3 and MAP3K17/TAOK2. Post-translationally, in response to genotoxic stress, MAP3K-phosphorylated MAP2K6 is ubiquitinated and degraded by the SCF(FBXO31) complex.

Its subcellular location is the nucleus. It localises to the cytoplasm. The protein resides in the cytoskeleton. The enzyme catalyses L-seryl-[protein] + ATP = O-phospho-L-seryl-[protein] + ADP + H(+). It catalyses the reaction L-threonyl-[protein] + ATP = O-phospho-L-threonyl-[protein] + ADP + H(+). It carries out the reaction L-tyrosyl-[protein] + ATP = O-phospho-L-tyrosyl-[protein] + ADP + H(+). Its activity is regulated as follows. Activated by dual phosphorylation on Ser-207 and Thr-211 in response to a variety of cellular stresses, including UV radiation, osmotic shock, hypoxia, inflammatory cytokines, interferon gamma (IFNG), and less often by growth factors. MAP2K6/MKK6 is activated by the majority of M3Ks, such as MAP3K5/ASK1, MAP3K1/MEKK1, MAP3K2/MEKK2, MAP3K3/MEKK3, MAP3K4/MEKK4, MAP3K7/TAK1, MAP3K11/MLK3 and MAP3K17/TAOK2. Its function is as follows. Dual specificity protein kinase which acts as an essential component of the MAP kinase signal transduction pathway. With MAP3K3/MKK3, catalyzes the concomitant phosphorylation of a threonine and a tyrosine residue in the MAP kinases p38 MAPK11, MAPK12, MAPK13 and MAPK14 and plays an important role in the regulation of cellular responses to cytokines and all kinds of stresses. Especially, MAP2K3/MKK3 and MAP2K6/MKK6 are both essential for the activation of MAPK11 and MAPK13 induced by environmental stress, whereas MAP2K6/MKK6 is the major MAPK11 activator in response to TNF. MAP2K6/MKK6 also phosphorylates and activates PAK6. The p38 MAP kinase signal transduction pathway leads to direct activation of transcription factors. Nuclear targets of p38 MAP kinase include the transcription factors ATF2 and ELK1. Within the p38 MAPK signal transduction pathway, MAP3K6/MKK6 mediates phosphorylation of STAT4 through MAPK14 activation, and is therefore required for STAT4 activation and STAT4-regulated gene expression in response to IL-12 stimulation. The pathway is also crucial for IL-6-induced SOCS3 expression and down-regulation of IL-6-mediated gene induction; and for IFNG-dependent gene transcription. Has a role in osteoclast differentiation through NF-kappa-B transactivation by TNFSF11, and in endochondral ossification and since SOX9 is another likely downstream target of the p38 MAPK pathway. MAP2K6/MKK6 mediates apoptotic cell death in thymocytes. Acts also as a regulator for melanocytes dendricity, through the modulation of Rho family GTPases. The protein is Dual specificity mitogen-activated protein kinase kinase 6 (Map2k6) of Mus musculus (Mouse).